A 669-amino-acid chain; its full sequence is Methionine--tRNA ligase (669 aa).

Positions 14-24 (YYPSGKLHIGN) match the 'HIGH' region motif. His161 serves as a coordination point for Zn(2+). Positions 309 to 313 (KMSKS) match the 'KMSKS' region motif. ATP is bound at residue Lys312. A tRNA-binding domain is found at 566–669 (DFDKVELKVA…KEMPNGAGIA (104 aa)).

This sequence belongs to the class-I aminoacyl-tRNA synthetase family. MetG type 2B subfamily. As to quaternary structure, homodimer.

It localises to the cytoplasm. The enzyme catalyses tRNA(Met) + L-methionine + ATP = L-methionyl-tRNA(Met) + AMP + diphosphate. In terms of biological role, is required not only for elongation of protein synthesis but also for the initiation of all mRNA translation through initiator tRNA(fMet) aminoacylation. The polypeptide is Methionine--tRNA ligase (Enterococcus faecalis (strain ATCC 700802 / V583)).